The sequence spans 427 residues: Tyrosine--tRNA ligase (427 aa).

Tyr-33 serves as a coordination point for L-tyrosine. Positions 38-47 match the 'HIGH' region motif; that stretch reads PTASSLTIGN. L-tyrosine-binding residues include Tyr-168 and Gln-172. The 'KMSKS' region motif lies at 228 to 232; the sequence is KFGKS. Position 231 (Lys-231) interacts with ATP. Residues 361–427 enclose the S4 RNA-binding domain; that stretch reads LDLLSTLTNS…KKNYYLLRFN (67 aa).

It belongs to the class-I aminoacyl-tRNA synthetase family. TyrS type 1 subfamily. As to quaternary structure, homodimer.

It is found in the cytoplasm. It catalyses the reaction tRNA(Tyr) + L-tyrosine + ATP = L-tyrosyl-tRNA(Tyr) + AMP + diphosphate + H(+). Catalyzes the attachment of tyrosine to tRNA(Tyr) in a two-step reaction: tyrosine is first activated by ATP to form Tyr-AMP and then transferred to the acceptor end of tRNA(Tyr). In Cytophaga hutchinsonii (strain ATCC 33406 / DSM 1761 / CIP 103989 / NBRC 15051 / NCIMB 9469 / D465), this protein is Tyrosine--tRNA ligase.